The chain runs to 622 residues: Low affinity potassium transport system protein Kup (622 aa).

12 consecutive transmembrane segments (helical) span residues 9 to 29, 49 to 69, 103 to 123, 137 to 157, 165 to 185, 213 to 233, 247 to 267, 276 to 296, 337 to 357, 363 to 383, 396 to 416, and 419 to 439; these read LPAI…TSPL, VFGF…IKYL, VIMG…TPAI, PQLD…LFMI, VGKL…GLGL, VSFI…ALYA, WFTV…ALLL, PFFL…AALA, IYIP…IVSF, LAAA…ILST, FVAL…TANL, and LLSG…VMTT.

This sequence belongs to the HAK/KUP transporter (TC 2.A.72) family.

The protein resides in the cell inner membrane. The catalysed reaction is K(+)(in) + H(+)(in) = K(+)(out) + H(+)(out). Responsible for the low-affinity transport of potassium into the cell. Likely operates as a K(+):H(+) symporter. In Escherichia fergusonii (strain ATCC 35469 / DSM 13698 / CCUG 18766 / IAM 14443 / JCM 21226 / LMG 7866 / NBRC 102419 / NCTC 12128 / CDC 0568-73), this protein is Low affinity potassium transport system protein Kup.